A 343-amino-acid polypeptide reads, in one-letter code: Mas-related G-protein coupled receptor member F (343 aa).

At 1–44 (MAGNCSWEAHPGNRNKMCPGLSEAPELYSRGFLTIEQIAMLPPP) the chain is on the extracellular side. Residue Asn-4 is glycosylated (N-linked (GlcNAc...) asparagine). Residues 45–66 (AVMNYIFLLLCLCGLVGNGLVL) traverse the membrane as a helical segment. At 67–82 (WFFGFSIKRNPFSIYF) the chain is on the cytoplasmic side. A helical membrane pass occupies residues 83–104 (LHLASADVGYLFSKAVFSILNT). Residues 105–123 (GGFLGTFADYIRSVCRVLG) lie on the Extracellular side of the membrane. A helical transmembrane segment spans residues 124–144 (LCMFLTGVSLLPAVSAERCAS). The Cytoplasmic segment spans residues 145–160 (VIFPAWYWRRRPKRLS). A helical transmembrane segment spans residues 161-181 (AVVCALLWVLSLLVTCLHNYF). Residues 182–198 (CVFLGRGAPGAACRHMD) are Extracellular-facing. The chain crosses the membrane as a helical span at residues 199–220 (IFLGILLFLLCCPLMVLPCLAL). Over 221–241 (ILHVECRARRRQRSAKLNHVI) the chain is Cytoplasmic. Residues 242-263 (LAMVSVFLVSSIYLGIDWFLFW) form a helical membrane-spanning segment. Over 264-273 (VFQIPAPFPE) the chain is Extracellular. The helical transmembrane segment at 274-294 (YVTDLCICINSSAKPIVYFLA) threads the bilayer. Residues 295–343 (GRDKSQRLWEPLRVVFQRALRDGAELGEAGGSTPNTVTMEMQCPPGNAS) lie on the Cytoplasmic side of the membrane. A disordered region spans residues 320 to 343 (LGEAGGSTPNTVTMEMQCPPGNAS).

This sequence belongs to the G-protein coupled receptor 1 family. Mas subfamily.

The protein localises to the cell membrane. Orphan receptor. May bind to a neuropeptide and may regulate nociceptor function and/or development, including the sensation or modulation of pain. This is Mas-related G-protein coupled receptor member F (MRGPRF) from Homo sapiens (Human).